Here is a 184-residue protein sequence, read N- to C-terminus: Ras-related protein Rap-1b (184 aa).

10 to 18 (GSGGVGKSA) contacts GTP. An interaction with KRIT1 region spans residues 25–67 (QGIFVEKYDPTIEDSYRKQVEVDAQQCMLEILDTAGTEQFTAM). The Effector region signature appears at 32 to 40 (YDPTIEDSY). Ser-39 is subject to ADP-ribosylserine; by botulinum toxin. GTP contacts are provided by residues 57–61 (DTAGT), 116–119 (NKCD), and 147–149 (SAK). Ser-179 carries the post-translational modification Phosphoserine; by PKA. Cys-181 carries the cysteine methyl ester modification. Cys-181 is lipidated: S-geranylgeranyl cysteine. The propeptide at 182–184 (QLL) is removed in mature form.

Belongs to the small GTPase superfamily. Ras family. In terms of assembly, heterodimer with RAP1GAP. Interacts with EPAC2. Interacts with SGSM1. Interacts with SGSM2. Interacts with SGSM3. Interacts with KRIT1. Interacts with RAP1GDS1.

It localises to the cell membrane. It is found in the cytoplasm. Its subcellular location is the cytosol. The protein resides in the cell junction. It carries out the reaction GTP + H2O = GDP + phosphate + H(+). With respect to regulation, activated by guanine nucleotide-exchange factor (GEF) EPAC2 in a cAMP-dependent manner. In terms of biological role, GTP-binding protein that possesses intrinsic GTPase activity. Contributes to the polarizing activity of KRIT1 and CDH5 in the establishment and maintenance of correct endothelial cell polarity and vascular lumen. Required for the localization of phosphorylated PRKCZ, PARD3 and TIAM1 to the cell junction. Plays a role in the establishment of basal endothelial barrier function. This Rattus norvegicus (Rat) protein is Ras-related protein Rap-1b (Rap1b).